The sequence spans 47 residues: Defensin NsD7 (47 aa).

4 disulfides stabilise this stretch: Cys-3–Cys-47, Cys-14–Cys-34, Cys-20–Cys-41, and Cys-24–Cys-43. Positions 4, 33, 36, and 39 each coordinate a 1,2-diacyl-sn-glycero-3-phosphate.

The protein belongs to the DEFL family. As to quaternary structure, in the presence of phosphatidic acid (PA), forms right-handed double helices which tend to bundle into fibrils. Each helix is a repetition of dimers containing 2 bound molecules of PA per dimer. Dimers are arranged orthogonally in a tip-to-tip configuration with 1 molecule of PA located at the dimer contact interface. Association of 2 helices to form a double helix depends on intercalating isoleucine residues Ile-15 and Ile-37. Bundling of double helices into fibrils depends on Arg-26.

It is found in the vacuole. In terms of biological role, plant defense peptide. Disrupts membranes containing phosphatidic acid (PA) via a PA-dependent oligomerization process. This is Defensin NsD7 from Nicotiana suaveolens (Australian tobacco).